We begin with the raw amino-acid sequence, 353 residues long: Photosystem II protein D1 (353 aa).

The residue at position 2 (T2) is an N-acetylthreonine. T2 carries the post-translational modification Phosphothreonine. A run of 3 helical transmembrane segments spans residues 29–46 (YIGW…TATS), 118–133 (HFLL…EWEL), and 142–156 (WIAV…AATA). Residue H118 coordinates chlorophyll a. Y126 is a pheophytin a binding site. D170 and E189 together coordinate [CaMn4O5] cluster. Residues 197–218 (FHMLGVAGVFGGSLFSAMHGSL) form a helical membrane-spanning segment. H198 serves as a coordination point for chlorophyll a. Residues H215 and 264 to 265 (SF) each bind a quinone. H215 is a binding site for Fe cation. H272 lines the Fe cation pocket. A helical membrane pass occupies residues 274 to 288 (FLAAWPVVGIWFTAL). [CaMn4O5] cluster contacts are provided by H332, E333, D342, and A344. Residues 345 to 353 (AVEAPSING) constitute a propeptide that is removed on maturation.

Belongs to the reaction center PufL/M/PsbA/D family. As to quaternary structure, PSII is composed of 1 copy each of membrane proteins PsbA, PsbB, PsbC, PsbD, PsbE, PsbF, PsbH, PsbI, PsbJ, PsbK, PsbL, PsbM, PsbT, PsbX, PsbY, PsbZ, Psb30/Ycf12, at least 3 peripheral proteins of the oxygen-evolving complex and a large number of cofactors. It forms dimeric complexes. Requires The D1/D2 heterodimer binds P680, chlorophylls that are the primary electron donor of PSII, and subsequent electron acceptors. It shares a non-heme iron and each subunit binds pheophytin, quinone, additional chlorophylls, carotenoids and lipids. D1 provides most of the ligands for the Mn4-Ca-O5 cluster of the oxygen-evolving complex (OEC). There is also a Cl(-1) ion associated with D1 and D2, which is required for oxygen evolution. The PSII complex binds additional chlorophylls, carotenoids and specific lipids. as cofactor. Post-translationally, tyr-161 forms a radical intermediate that is referred to as redox-active TyrZ, YZ or Y-Z. C-terminally processed by CTPA; processing is essential to allow assembly of the oxygen-evolving complex and thus photosynthetic growth.

Its subcellular location is the plastid. The protein localises to the chloroplast thylakoid membrane. It carries out the reaction 2 a plastoquinone + 4 hnu + 2 H2O = 2 a plastoquinol + O2. In terms of biological role, this is one of the two reaction center proteins of photosystem II. Functionally, photosystem II (PSII) is a light-driven water:plastoquinone oxidoreductase that uses light energy to abstract electrons from H(2)O, generating O(2) and a proton gradient subsequently used for ATP formation. It consists of a core antenna complex that captures photons, and an electron transfer chain that converts photonic excitation into a charge separation. The D1/D2 (PsbA/PsbD) reaction center heterodimer binds P680, the primary electron donor of PSII as well as several subsequent electron acceptors. This Pisum sativum (Garden pea) protein is Photosystem II protein D1.